Consider the following 381-residue polypeptide: Carbamoyl phosphate synthase small chain (381 aa).

Positions 1-192 (MSKPAILALE…SGYADVSQGD (192 aa)) are CPSase. Positions 47, 244, and 246 each coordinate L-glutamine. The Glutamine amidotransferase type-1 domain occupies 196–381 (HVVAYDYGMK…RFVEMMRHRR (186 aa)). Catalysis depends on Cys272, which acts as the Nucleophile. L-glutamine is bound by residues Leu273, Gln276, Asn314, Gly316, and Phe317. Catalysis depends on residues His356 and Glu358.

The protein belongs to the CarA family. In terms of assembly, composed of two chains; the small (or glutamine) chain promotes the hydrolysis of glutamine to ammonia, which is used by the large (or ammonia) chain to synthesize carbamoyl phosphate. Tetramer of heterodimers (alpha,beta)4.

The catalysed reaction is hydrogencarbonate + L-glutamine + 2 ATP + H2O = carbamoyl phosphate + L-glutamate + 2 ADP + phosphate + 2 H(+). The enzyme catalyses L-glutamine + H2O = L-glutamate + NH4(+). It functions in the pathway amino-acid biosynthesis; L-arginine biosynthesis; carbamoyl phosphate from bicarbonate: step 1/1. Its pathway is pyrimidine metabolism; UMP biosynthesis via de novo pathway; (S)-dihydroorotate from bicarbonate: step 1/3. Its function is as follows. Small subunit of the glutamine-dependent carbamoyl phosphate synthetase (CPSase). CPSase catalyzes the formation of carbamoyl phosphate from the ammonia moiety of glutamine, carbonate, and phosphate donated by ATP, constituting the first step of 2 biosynthetic pathways, one leading to arginine and/or urea and the other to pyrimidine nucleotides. The small subunit (glutamine amidotransferase) binds and cleaves glutamine to supply the large subunit with the substrate ammonia. In Halomonas eurihalina, this protein is Carbamoyl phosphate synthase small chain.